A 4466-amino-acid polypeptide reads, in one-letter code: Dynein beta chain, ciliary (4466 aa).

Residues 1–1813 (MADVVDPRLE…YANICDAQFK (1813 aa)) are stem. 154-161 (AGQVKGKT) lines the ATP pocket. Coiled-coil stretches lie at residues 733–805 (TVLE…WTKQ), 1036–1056 (TLDQ…EADE), 1306–1337 (WLEI…AWDA), and 1443–1468 (LLKS…MTSK). AAA regions lie at residues 1814–2035 (YSYE…VLVV), 2095–2316 (KVVK…VRFK), 2422–2669 (ELDP…VFQG), and 2767–3016 (TYNE…ERRY). Residues 1852 to 1859 (GPAGTGKT), 2133 to 2140 (GNAGTGKS), 2460 to 2467 (GNAGLGKS), and 2805 to 2812 (GVGGSGKQ) each bind ATP. 3 coiled-coil regions span residues 3033-3092 (SLLS…QVVG), 3263-3325 (EPKR…SRTI), and 3573-3642 (QERP…EEAK). The segment at 3033-3325 (SLLSMKSKEL…QEAEATSRTI (293 aa)) is stalk. 2 AAA regions span residues 3409 to 3636 (LTDD…EISV) and 3846 to 4072 (VRNF…VLYN).

Belongs to the dynein heavy chain family. As to quaternary structure, consists of at least two heavy chains (alpha and beta), three intermediate chains and several light chains.

It is found in the cell projection. The protein localises to the cilium. The protein resides in the flagellum. It localises to the cytoplasm. Its subcellular location is the cytoskeleton. It is found in the flagellum axoneme. In terms of biological role, force generating protein of eukaryotic cilia and flagella. Produces force towards the minus ends of microtubules. Dynein has ATPase activity; the force-producing power stroke is thought to occur on release of ADP. The protein is Dynein beta chain, ciliary of Tripneustes gratilla (Hawaian sea urchin).